A 199-amino-acid polypeptide reads, in one-letter code: dTTP/UTP pyrophosphatase (199 aa).

The active-site Proton acceptor is the Asp-76.

This sequence belongs to the Maf family. YhdE subfamily. The cofactor is a divalent metal cation.

It is found in the cytoplasm. It catalyses the reaction dTTP + H2O = dTMP + diphosphate + H(+). The enzyme catalyses UTP + H2O = UMP + diphosphate + H(+). Its function is as follows. Nucleoside triphosphate pyrophosphatase that hydrolyzes dTTP and UTP. May have a dual role in cell division arrest and in preventing the incorporation of modified nucleotides into cellular nucleic acids. The chain is dTTP/UTP pyrophosphatase from Chlorobaculum parvum (strain DSM 263 / NCIMB 8327) (Chlorobium vibrioforme subsp. thiosulfatophilum).